The following is a 277-amino-acid chain: Tryptophan synthase alpha chain (277 aa).

Active-site proton acceptor residues include Glu-43 and Glu-54.

The protein belongs to the TrpA family. In terms of assembly, tetramer of two alpha and two beta chains.

The enzyme catalyses (1S,2R)-1-C-(indol-3-yl)glycerol 3-phosphate + L-serine = D-glyceraldehyde 3-phosphate + L-tryptophan + H2O. Its pathway is amino-acid biosynthesis; L-tryptophan biosynthesis; L-tryptophan from chorismate: step 5/5. The alpha subunit is responsible for the aldol cleavage of indoleglycerol phosphate to indole and glyceraldehyde 3-phosphate. The sequence is that of Tryptophan synthase alpha chain from Haloferax volcanii (strain ATCC 29605 / DSM 3757 / JCM 8879 / NBRC 14742 / NCIMB 2012 / VKM B-1768 / DS2) (Halobacterium volcanii).